Consider the following 239-residue polypeptide: MKNNIITPRYNLEGVFLRQIHSFVCRKGRTTTSQLSAIKKYWSLIGVDFQLNALNFSSIFKHRAPIILEIGFGSGESLVKTAMNFPDKNFLGIEVYKSGIGSCLHYASSYQIQNLRIIYYDATEVMYNMIPDDTLSKVQIFFPDPWHKKRHHKRRLLKNIFLKIITKKLIIDGILHIATDSESYAFYILDEIKDIKNYKNLSEKNNFVKRPVSRIITKFEKKGLLQGKKIFDLMFQLKK.

Residues E69, E94, D121, and D144 each coordinate S-adenosyl-L-methionine. D144 is a catalytic residue. Residues K148, D180, and 217–220 (TKFE) contribute to the substrate site.

This sequence belongs to the class I-like SAM-binding methyltransferase superfamily. TrmB family. Monomer.

It carries out the reaction guanosine(46) in tRNA + S-adenosyl-L-methionine = N(7)-methylguanosine(46) in tRNA + S-adenosyl-L-homocysteine. It functions in the pathway tRNA modification; N(7)-methylguanine-tRNA biosynthesis. Catalyzes the formation of N(7)-methylguanine at position 46 (m7G46) in tRNA. The sequence is that of tRNA (guanine-N(7)-)-methyltransferase from Buchnera aphidicola subsp. Acyrthosiphon pisum (strain Tuc7).